The sequence spans 264 residues: 1-(5-phosphoribosyl)-5-[(5-phosphoribosylamino)methylideneamino] imidazole-4-carboxamide isomerase (264 aa).

The protein belongs to the HisA/HisF family.

The protein resides in the cytoplasm. The enzyme catalyses 1-(5-phospho-beta-D-ribosyl)-5-[(5-phospho-beta-D-ribosylamino)methylideneamino]imidazole-4-carboxamide = 5-[(5-phospho-1-deoxy-D-ribulos-1-ylimino)methylamino]-1-(5-phospho-beta-D-ribosyl)imidazole-4-carboxamide. It participates in amino-acid biosynthesis; L-histidine biosynthesis; L-histidine from 5-phospho-alpha-D-ribose 1-diphosphate: step 4/9. This is 1-(5-phosphoribosyl)-5-[(5-phosphoribosylamino)methylideneamino] imidazole-4-carboxamide isomerase (HIS6) from Yarrowia lipolytica (strain CLIB 122 / E 150) (Yeast).